The primary structure comprises 377 residues: P2Y purinoceptor 2 (377 aa).

Residues 1-32 (MAADLGPWNDTINGTWDGDELGYRCRFNEDFK) lie on the Extracellular side of the membrane. N9 and N13 each carry an N-linked (GlcNAc...) asparagine glycan. Residues 33 to 59 (YVLLPVSYGVVCVPGLCLNAVALYIFL) form a helical membrane-spanning segment. Residues 60–70 (CRLKTWNASTT) lie on the Cytoplasmic side of the membrane. The chain crosses the membrane as a helical span at residues 71–93 (YMFHLAVSDALYAASLPLLVYYY). At 94-110 (ARGDHWPFSTVLCKLVR) the chain is on the extracellular side. An intrachain disulfide couples C106 to C183. A helical transmembrane segment spans residues 111 to 129 (FLFYTNLYCSILFLTCISV). The Cytoplasmic portion of the chain corresponds to 130-152 (HRCLGVLRPLRSLRWGRARYARR). A helical transmembrane segment spans residues 153–172 (VAGAVWVLVLACQAPVLYFV). Topologically, residues 173-194 (TTSARGGRVTCHDTSAPELFSR) are extracellular. Residues 195-220 (FVAYSSVMLGLLFAVPFAVILVCYVL) traverse the membrane as a helical segment. At 221–246 (MARRLLKPAYGTSGGLPRAKRKSVRT) the chain is on the cytoplasmic side. Residues 247 to 269 (IAVVLAVFALCFLPFHVTRTLYY) traverse the membrane as a helical segment. At 270–287 (SFRSLDLSCHTLNAINMA) the chain is on the extracellular side. The helical transmembrane segment at 288–309 (YKVTRPLASANSCLDPVLYFLA) threads the bilayer. At 310–377 (GQRLVRFARD…GSENTKDIRL (68 aa)) the chain is on the cytoplasmic side. Positions 318–377 (RDAKPPTGPSPATPARRRLGLRRSDRTDMQRIEDVLGSSEDSRRTESTPAGSENTKDIRL) are disordered. Positions 339–363 (RRSDRTDMQRIEDVLGSSEDSRRTE) are enriched in basic and acidic residues.

It belongs to the G-protein coupled receptor 1 family. Spleen, testis, kidney, liver, lung, heart and brain.

It is found in the cell membrane. In terms of biological role, receptor for ATP and UTP coupled to G-proteins that activate a phosphatidylinositol-calcium second messenger system. The affinity range is UTP = ATP &gt; ATP-gamma-S &gt;&gt; 2-methylthio-ATP = ADP. The polypeptide is P2Y purinoceptor 2 (P2RY2) (Homo sapiens (Human)).